Here is a 129-residue protein sequence, read N- to C-terminus: Small ribosomal subunit protein uS11 (129 aa).

Belongs to the universal ribosomal protein uS11 family. As to quaternary structure, part of the 30S ribosomal subunit. Interacts with proteins S7 and S18. Binds to IF-3.

In terms of biological role, located on the platform of the 30S subunit, it bridges several disparate RNA helices of the 16S rRNA. Forms part of the Shine-Dalgarno cleft in the 70S ribosome. This Maridesulfovibrio salexigens (strain ATCC 14822 / DSM 2638 / NCIMB 8403 / VKM B-1763) (Desulfovibrio salexigens) protein is Small ribosomal subunit protein uS11.